The following is a 572-amino-acid chain: Proline--tRNA ligase (572 aa).

This sequence belongs to the class-II aminoacyl-tRNA synthetase family. ProS type 1 subfamily. In terms of assembly, homodimer.

It is found in the cytoplasm. It carries out the reaction tRNA(Pro) + L-proline + ATP = L-prolyl-tRNA(Pro) + AMP + diphosphate. In terms of biological role, catalyzes the attachment of proline to tRNA(Pro) in a two-step reaction: proline is first activated by ATP to form Pro-AMP and then transferred to the acceptor end of tRNA(Pro). As ProRS can inadvertently accommodate and process non-cognate amino acids such as alanine and cysteine, to avoid such errors it has two additional distinct editing activities against alanine. One activity is designated as 'pretransfer' editing and involves the tRNA(Pro)-independent hydrolysis of activated Ala-AMP. The other activity is designated 'posttransfer' editing and involves deacylation of mischarged Ala-tRNA(Pro). The misacylated Cys-tRNA(Pro) is not edited by ProRS. The chain is Proline--tRNA ligase from Buchnera aphidicola subsp. Acyrthosiphon pisum (strain 5A).